The following is a 172-amino-acid chain: MVSNWNRNGMKRRRTPRRGYGRPYKPVVPITRVVVHQSALLKKDEVVGCEIKPDGDVARYKMRKVMLTCTLRMPPGELVNYIIVKSSSPIANWAAAFTAPALLVKESCQDMISIIAKGKVESNGVAGTDCTKSFNKFIRLGAGISQTQHLYVVMYTSVALKVVLEHRVYIEL.

The interval 1–23 is disordered; it reads MVSNWNRNGMKRRRTPRRGYGRP. The segment covering 9-20 has biased composition (basic residues); it reads GMKRRRTPRRGY.

It belongs to the nanoviridae capsid protein family.

Its subcellular location is the virion. The chain is Capsid protein (DNA-S) from Milk vetch dwarf virus (isolate 9) (MDV).